The primary structure comprises 753 residues: 5-methyltetrahydropteroyltriglutamate--homocysteine methyltransferase (753 aa).

5-methyltetrahydropteroyltri-L-glutamate contacts are provided by residues Arg17–Lys20 and Lys117. L-homocysteine is bound by residues Ile431–Ser433 and Glu484. L-methionine contacts are provided by residues Ile431–Ser433 and Glu484. 5-methyltetrahydropteroyltri-L-glutamate-binding positions include Arg515–Cys516 and Trp561. Asp599 serves as a coordination point for L-homocysteine. Asp599 contributes to the L-methionine binding site. 5-methyltetrahydropteroyltri-L-glutamate is bound at residue Glu605. The Zn(2+) site is built by His641, Cys643, and Glu665. Catalysis depends on His694, which acts as the Proton donor. Position 726 (Cys726) interacts with Zn(2+).

This sequence belongs to the vitamin-B12 independent methionine synthase family. Zn(2+) serves as cofactor.

The enzyme catalyses 5-methyltetrahydropteroyltri-L-glutamate + L-homocysteine = tetrahydropteroyltri-L-glutamate + L-methionine. The protein operates within amino-acid biosynthesis; L-methionine biosynthesis via de novo pathway; L-methionine from L-homocysteine (MetE route): step 1/1. Its function is as follows. Catalyzes the transfer of a methyl group from 5-methyltetrahydrofolate to homocysteine resulting in methionine formation. This Cronobacter sakazakii (strain ATCC BAA-894) (Enterobacter sakazakii) protein is 5-methyltetrahydropteroyltriglutamate--homocysteine methyltransferase.